Consider the following 179-residue polypeptide: Monothiol glutaredoxin-S12, chloroplastic (179 aa).

Residues 1 to 61 (MVAATVNLAN…WPPLRCSSVK (61 aa)) constitute a chloroplast transit peptide. At A62 the chain carries N-acetylalanine. The 102-residue stretch at 75–176 (EETVKTTVAE…AILAEANGKN (102 aa)) folds into the Glutaredoxin domain. Position 95 (C95) interacts with [2Fe-2S] cluster.

Belongs to the glutaredoxin family. CPYC subfamily.

Its subcellular location is the plastid. The protein localises to the chloroplast. In terms of biological role, may only reduce GSH-thiol disulfides, but not protein disulfides. In Arabidopsis thaliana (Mouse-ear cress), this protein is Monothiol glutaredoxin-S12, chloroplastic (GRXS12).